Consider the following 411-residue polypeptide: Serine hydroxymethyltransferase (411 aa).

(6S)-5,6,7,8-tetrahydrofolate-binding positions include L119 and 123-125; that span reads GHL. K228 carries the post-translational modification N6-(pyridoxal phosphate)lysine.

Belongs to the SHMT family. Homodimer. Pyridoxal 5'-phosphate is required as a cofactor.

It localises to the cytoplasm. The catalysed reaction is (6R)-5,10-methylene-5,6,7,8-tetrahydrofolate + glycine + H2O = (6S)-5,6,7,8-tetrahydrofolate + L-serine. Its pathway is one-carbon metabolism; tetrahydrofolate interconversion. It functions in the pathway amino-acid biosynthesis; glycine biosynthesis; glycine from L-serine: step 1/1. Its function is as follows. Catalyzes the reversible interconversion of serine and glycine with tetrahydrofolate (THF) serving as the one-carbon carrier. This reaction serves as the major source of one-carbon groups required for the biosynthesis of purines, thymidylate, methionine, and other important biomolecules. Also exhibits THF-independent aldolase activity toward beta-hydroxyamino acids, producing glycine and aldehydes, via a retro-aldol mechanism. The sequence is that of Serine hydroxymethyltransferase from Clostridium kluyveri (strain NBRC 12016).